The primary structure comprises 196 residues: Nucleoside triphosphate pyrophosphatase (196 aa).

Catalysis depends on Asp73, which acts as the Proton acceptor.

This sequence belongs to the Maf family. Requires a divalent metal cation as cofactor.

It localises to the cytoplasm. It catalyses the reaction a ribonucleoside 5'-triphosphate + H2O = a ribonucleoside 5'-phosphate + diphosphate + H(+). It carries out the reaction a 2'-deoxyribonucleoside 5'-triphosphate + H2O = a 2'-deoxyribonucleoside 5'-phosphate + diphosphate + H(+). Nucleoside triphosphate pyrophosphatase. May have a dual role in cell division arrest and in preventing the incorporation of modified nucleotides into cellular nucleic acids. This is Nucleoside triphosphate pyrophosphatase from Chlamydia pneumoniae (Chlamydophila pneumoniae).